We begin with the raw amino-acid sequence, 428 residues long: MTAIIDLHAREILDSRGNPTVEVDVLLEDGSFGRAAVPSGASTGAHEAIELRDGDQGRYLGKGVTRAVDAVNTTIADTLLGLDAEDQRDIDTVMLDLDGTPNKAKLGANAILGTSLAVAKAAAAARGMPLWAYVGGVSAHMLPVPMMNIVNGGEHADNPIDIQEFMVMPVGADSLAEAVRWGAEIFHTLKKGLSEKGLSTSVGDEGGFAPDIASTRDALDFIMQSIEKAGFKPGEEVALALDCASTEFFADGRYDLAGEEVSLSPEEMAKYLADLCNDYPIRSIEDGMAEDDLEGWKALTDLIGNKVQLVGDDLFVTNSERLAMGIDKGLANSLLVKVNQIGTLSETLEAVDMAHRAGYTCVMSHRSGETEDATIADLAVATNCGQIKTGSLARSDRLAKYNQLIRIEEELGNSAHYAGAACFGRLAR.

Gln163 contacts (2R)-2-phosphoglycerate. The active-site Proton donor is the Glu205. Residues Asp242, Glu285, and Asp312 each contribute to the Mg(2+) site. The (2R)-2-phosphoglycerate site is built by Lys337, Arg366, Ser367, and Lys388. Catalysis depends on Lys337, which acts as the Proton acceptor.

It belongs to the enolase family. Mg(2+) is required as a cofactor.

Its subcellular location is the cytoplasm. The protein localises to the secreted. It is found in the cell surface. The catalysed reaction is (2R)-2-phosphoglycerate = phosphoenolpyruvate + H2O. It participates in carbohydrate degradation; glycolysis; pyruvate from D-glyceraldehyde 3-phosphate: step 4/5. In terms of biological role, catalyzes the reversible conversion of 2-phosphoglycerate (2-PG) into phosphoenolpyruvate (PEP). It is essential for the degradation of carbohydrates via glycolysis. The protein is Enolase of Erythrobacter litoralis (strain HTCC2594).